The chain runs to 152 residues: Large ribosomal subunit protein bL9 (152 aa).

It belongs to the bacterial ribosomal protein bL9 family.

Its function is as follows. Binds to the 23S rRNA. This is Large ribosomal subunit protein bL9 from Synechococcus sp. (strain WH7803).